A 432-amino-acid polypeptide reads, in one-letter code: Ribulose bisphosphate carboxylase-like protein 2 (432 aa).

Residues K198, D200, and E201 each coordinate Mg(2+). Residue K198 is modified to N6-carboxylysine.

This sequence belongs to the RuBisCO large chain family. Type IV subfamily. In terms of assembly, homodimer. Requires Mg(2+) as cofactor.

In terms of biological role, may be involved in sulfur metabolism and oxidative stress response. Does not show RuBisCO activity. The sequence is that of Ribulose bisphosphate carboxylase-like protein 2 (rlp2) from Rhodopseudomonas palustris (strain ATCC BAA-98 / CGA009).